The primary structure comprises 102 residues: MRKFETLLLLSPELSAENREGVVSTFTGIIEREKGVMEEVDNWGMRDLAYPVRKLMRGYYVRLVYQGPAPLVAELERNIRMTDGVFKFVTVKLADEVAGEVA.

This sequence belongs to the bacterial ribosomal protein bS6 family.

In terms of biological role, binds together with bS18 to 16S ribosomal RNA. The protein is Small ribosomal subunit protein bS6 of Desulfovibrio desulfuricans (strain ATCC 27774 / DSM 6949 / MB).